The primary structure comprises 181 residues: SAGA-associated factor 11 (181 aa).

The SGF11-type zinc-finger motif lies at 93–114 (FNCMNCGRQIVAGRFAPHLEKC). Residues 116–125 (GKGRKARAKT) are compositionally biased toward basic residues. A disordered region spans residues 116–181 (GKGRKARAKT…FTVRENVKGD (66 aa)). Residues 126–153 (TRSTTAAQNRNARRSPNPRYSPYPNSAS) are compositionally biased toward low complexity.

This sequence belongs to the SGF11 family. In terms of assembly, component of a deubiquitination module (DUB module) formed by ENY2, SGF11, and UBP22 in Arabidopsis. Interacts directly with ENY2 and UBP22. Interacts with DDA1. Ubiquitinated in DET1-dependent manner. Ubiquitination probably leads to its subsequent proteasomal degradation.

It is found in the nucleus. The protein localises to the nucleoplasm. In terms of biological role, component of a deubiquitination module (DUB module) that specifically deubiquinates monoubiquinated histone H2B (H2Bub). Does not seem to be a component of the TREX-2 complex. Seems to act independently of the SAGA multiprotein complex. The DUB module is responsible for the major H2Bub deubiquitinase activity in Arabidopsis. The polypeptide is SAGA-associated factor 11 (Arabidopsis thaliana (Mouse-ear cress)).